The chain runs to 396 residues: Elongation factor Tu (396 aa).

One can recognise a tr-type G domain in the interval 10–206 (KPHCNIGTIG…AVDSYIPQPE (197 aa)). The segment at 19–26 (GHVDHGKT) is G1. 19–26 (GHVDHGKT) is a binding site for GTP. Thr-26 serves as a coordination point for Mg(2+). The G2 stretch occupies residues 60 to 64 (GITIS). Positions 81–84 (DCPG) are G3. GTP contacts are provided by residues 81-85 (DCPGH) and 136-139 (NKCD). The interval 136 to 139 (NKCD) is G4. The tract at residues 174-176 (SAL) is G5.

It belongs to the TRAFAC class translation factor GTPase superfamily. Classic translation factor GTPase family. EF-Tu/EF-1A subfamily. In terms of assembly, monomer.

It is found in the cytoplasm. The catalysed reaction is GTP + H2O = GDP + phosphate + H(+). In terms of biological role, GTP hydrolase that promotes the GTP-dependent binding of aminoacyl-tRNA to the A-site of ribosomes during protein biosynthesis. In Rhodopseudomonas palustris (strain BisA53), this protein is Elongation factor Tu.